The primary structure comprises 267 residues: Imidazole glycerol phosphate synthase subunit HisF (267 aa).

Active-site residues include D22 and D141.

Belongs to the HisA/HisF family. In terms of assembly, heterodimer of HisH and HisF.

It is found in the cytoplasm. It catalyses the reaction 5-[(5-phospho-1-deoxy-D-ribulos-1-ylimino)methylamino]-1-(5-phospho-beta-D-ribosyl)imidazole-4-carboxamide + L-glutamine = D-erythro-1-(imidazol-4-yl)glycerol 3-phosphate + 5-amino-1-(5-phospho-beta-D-ribosyl)imidazole-4-carboxamide + L-glutamate + H(+). It participates in amino-acid biosynthesis; L-histidine biosynthesis; L-histidine from 5-phospho-alpha-D-ribose 1-diphosphate: step 5/9. Functionally, IGPS catalyzes the conversion of PRFAR and glutamine to IGP, AICAR and glutamate. The HisF subunit catalyzes the cyclization activity that produces IGP and AICAR from PRFAR using the ammonia provided by the HisH subunit. The chain is Imidazole glycerol phosphate synthase subunit HisF from Mycobacterium tuberculosis (strain ATCC 25177 / H37Ra).